The primary structure comprises 299 residues: uncharacterized protein (299 aa).

Residues 1–44 (MSDSNLTNPIKAFFHDEFPEQYQEPPGLQKNMKPVPDCGEKSYK) form a disordered region. 55–79 (LVTGGDSGIGRAAAIAYAREGADVA) serves as a coordination point for NADP(+). Residue serine 188 participates in substrate binding. The Proton acceptor role is filled by tyrosine 201.

Belongs to the short-chain dehydrogenases/reductases (SDR) family.

This is an uncharacterized protein from Bacillus subtilis (strain 168).